The chain runs to 380 residues: Endo-polygalacturonase (380 aa).

The N-terminal stretch at Met-1–Ala-17 is a signal peptide. Positions Val-18–Arg-42 are excised as a propeptide. A disulfide bond links Cys-46 and Cys-64. PbH1 repeat units follow at residues Ala-178–Ser-207, Ser-208–Ser-229, Gly-230–Ser-250, Val-259–Thr-280, Val-288–Gln-310, and Thr-322–Ala-343. The active-site Proton donor is the Asp-222. Cys-224 and Cys-240 are oxidised to a cystine. The active site involves His-244. An intrachain disulfide couples Cys-350 to Cys-353. N-linked (GlcNAc...) asparagine glycosylation is present at Asn-361. Cys-371 and Cys-380 are joined by a disulfide.

Belongs to the glycosyl hydrolase 28 family.

It localises to the secreted. It carries out the reaction (1,4-alpha-D-galacturonosyl)n+m + H2O = (1,4-alpha-D-galacturonosyl)n + (1,4-alpha-D-galacturonosyl)m.. The protein is Endo-polygalacturonase (PG1) of Sclerotinia sclerotiorum (White mold).